The following is a 270-amino-acid chain: tRNA pseudouridine synthase A (270 aa).

The active-site Nucleophile is aspartate 51. Tyrosine 109 serves as a coordination point for substrate.

Belongs to the tRNA pseudouridine synthase TruA family. As to quaternary structure, homodimer.

The catalysed reaction is uridine(38/39/40) in tRNA = pseudouridine(38/39/40) in tRNA. Formation of pseudouridine at positions 38, 39 and 40 in the anticodon stem and loop of transfer RNAs. The protein is tRNA pseudouridine synthase A of Burkholderia vietnamiensis (strain G4 / LMG 22486) (Burkholderia cepacia (strain R1808)).